Consider the following 325-residue polypeptide: MYNVRTDLAVESREIYKHRYNREIDGVVFEEKTVEEDIKVTNVDILNEEGAKAMEKPIGRYVTIDIPDYTHYDGGIMDEVSHVVAASLEELINLPEERTALVVGLGNWNVTPDAIGPKVVGKLMVTRHLKKVMPDIIDDSVRPVCAIAPGVLGITGIETGEIIKSLVEKIKPDLVVCIDALASRKLERVARTIQISNTGISPGAGVGNHRMQINEESLGIPVIALGVPTVVDAATIANDAMDLVLDEMINQADAGKEFYNILNNIDKNEKGMMIKSLLDPYVGDLMVTPKEIDDIIESVSKIIANGINIALQPNMVLEDINKFLN.

Residues Met-1–Asp-7 constitute a propeptide that is removed on maturation.

It belongs to the peptidase A25 family. In terms of assembly, homotetramer. Post-translationally, autoproteolytically processed. The inactive tetrameric zymogen termed p46 autoprocesses to a smaller form termed p41, which is active only during spore germination.

The catalysed reaction is Endopeptidase action with P4 Glu or Asp, P1 preferably Glu &gt; Asp, P1' hydrophobic and P2' Ala.. Functionally, initiates the rapid degradation of small, acid-soluble proteins during spore germination. The sequence is that of Germination protease from Clostridium perfringens (strain SM101 / Type A).